Consider the following 208-residue polypeptide: MKKTVKNLTALLTLALAAPWALADAASELQTRLRKVSVFSADFTQNVSSANGKQVQQGSGKIQIKRPNLFRMDNKKPQESQIIADGKTLWFYDPFVEQVTANWVSDAVNNTPFVLLTSNEQSHWNQYNVQQNADTFVLKPKAKNSNIKQFDIRIDGNGVLKGFSTIEKDGQSNLYMLRNINNNDIADNLFRFSVPKGAEFDDQRKKKK.

The first 23 residues, 1–23, serve as a signal peptide directing secretion; it reads MKKTVKNLTALLTLALAAPWALA.

It belongs to the LolA family. As to quaternary structure, monomer.

It localises to the periplasm. Functionally, participates in the translocation of lipoproteins from the inner membrane to the outer membrane. Only forms a complex with a lipoprotein if the residue after the N-terminal Cys is not an aspartate (The Asp acts as a targeting signal to indicate that the lipoprotein should stay in the inner membrane). In Actinobacillus succinogenes (strain ATCC 55618 / DSM 22257 / CCUG 43843 / 130Z), this protein is Outer-membrane lipoprotein carrier protein.